We begin with the raw amino-acid sequence, 432 residues long: Serine--tRNA ligase (432 aa).

235–237 (TSE) serves as a coordination point for L-serine. 266–268 (RSE) lines the ATP pocket. L-serine is bound at residue glutamate 289. 353–356 (EISS) provides a ligand contact to ATP. Position 388 (serine 388) interacts with L-serine.

Belongs to the class-II aminoacyl-tRNA synthetase family. Type-1 seryl-tRNA synthetase subfamily. Homodimer. The tRNA molecule binds across the dimer.

It localises to the cytoplasm. The catalysed reaction is tRNA(Ser) + L-serine + ATP = L-seryl-tRNA(Ser) + AMP + diphosphate + H(+). It catalyses the reaction tRNA(Sec) + L-serine + ATP = L-seryl-tRNA(Sec) + AMP + diphosphate + H(+). It participates in aminoacyl-tRNA biosynthesis; selenocysteinyl-tRNA(Sec) biosynthesis; L-seryl-tRNA(Sec) from L-serine and tRNA(Sec): step 1/1. Its function is as follows. Catalyzes the attachment of serine to tRNA(Ser). Is also able to aminoacylate tRNA(Sec) with serine, to form the misacylated tRNA L-seryl-tRNA(Sec), which will be further converted into selenocysteinyl-tRNA(Sec). The polypeptide is Serine--tRNA ligase (Paraburkholderia phymatum (strain DSM 17167 / CIP 108236 / LMG 21445 / STM815) (Burkholderia phymatum)).